The primary structure comprises 1344 residues: Centrosomal P4.1-associated protein (1344 aa).

Disordered regions lie at residues 67-123 (SSEE…NNDL) and 187-225 (PGTLLPDDQSQKHRSPGDLTLPPHSYSNPTQENSCASNV). Residues 211–225 (SYSNPTQENSCASNV) show a composition bias toward polar residues. Residue Ser-248 is modified to Phosphoserine. The interval 257–300 (QEAHVKRNDLKEESPAHPSGEGALPRWEKKMGRSQEGKDVNLQK) is disordered. Basic and acidic residues-rich tracts occupy residues 259–271 (AHVKRNDLKEESP) and 282–297 (RWEKKMGRSQEGKDVN). Phosphoserine is present on Ser-304. The alpha/beta-tubulin binding stretch occupies residues 307 to 382 (VVNIDERPIK…FTNAKSKFQK (76 aa)). Disordered stretches follow at residues 347 to 407 (QEAE…DRQH) and 425 to 470 (TVKK…KKRD). The segment covering 388–398 (LASTQSPSEDQ) has biased composition (polar residues). Ser-528 carries the phosphoserine modification. Phosphoserine; by PLK2 occurs at positions 577 and 583. Disordered regions lie at residues 600–626 (RLSSTPVKAVQQREAQQADPRGQSNCS) and 672–735 (TSEI…DTGA). Basic and acidic residues predominate over residues 709-720 (VGDRVFSNREDS). The residue at position 748 (Ser-748) is a Phosphoserine. Residues 887 to 1344 (QPPEFMVCFI…DGNVLMDTEM (458 aa)) form an interaction with STIL region. The disordered stretch occupies residues 1105–1133 (QGNLSRRIKSAPPRDLGSSDKGQAALPRE).

It belongs to the TCP10 family. In terms of assembly, forms homodimers. Associates with microtubules plus ends; binds to beta-tubulin subunits exposed on microtubule outer surface at its distal tip; also associates with microtubule lattice. Associated with the gamma-tubulin complex. Interacts with the head domain of EPB41. Interacts with LYST. Interacts with CEP152 (via C-terminus). Interacts with STIL. Forms a complex with STIL and SASS6. Phosphorylation at Ser-577 and Ser-583 by PLK2 is required for procentriole formation and centriole elongation. Phosphorylation by PLK2 oscillates during the cell cycle: it increases at G1/S transition and decreases during the exit from mitosis. Phosphorylation at Ser-583 is also mediated by PLK4 but is not a critical step in PLK4 function in procentriole assembly.

Its subcellular location is the cytoplasm. It is found in the cytoskeleton. The protein resides in the microtubule organizing center. It localises to the centrosome. The protein localises to the centriole. In terms of biological role, plays an important role in cell division and centrosome function by participating in centriole duplication. Inhibits microtubule nucleation from the centrosome. Involved in the regulation of slow processive growth of centriolar microtubules. Acts as microtubule plus-end tracking protein that stabilizes centriolar microtubules and inhibits microtubule polymerization and extension from the distal ends of centrioles. Required for centriole elongation and for STIL-mediated centriole amplification. Required for the recruitment of CEP295 to the proximal end of new-born centrioles at the centriolar microtubule wall during early S phase in a PLK4-dependent manner. May be involved in the control of centriolar-microtubule growth by acting as a regulator of tubulin release. The protein is Centrosomal P4.1-associated protein (Cpap) of Mus musculus (Mouse).